The sequence spans 219 residues: Polysialic acid transport ATP-binding protein KpsT (219 aa).

One can recognise an ABC transporter domain in the interval isoleucine 2 to aspartate 218. Glycine 38–serine 45 is a binding site for ATP.

This sequence belongs to the ABC transporter superfamily.

Its subcellular location is the cell inner membrane. Its function is as follows. Putative ATP-binding protein, and an energy coupling component for the transport of polysialic acid across the cytoplasmic membrane. This chain is Polysialic acid transport ATP-binding protein KpsT (kpsT), found in Escherichia coli.